A 922-amino-acid chain; its full sequence is Neuropilin-1 (922 aa).

Positions 1 to 21 (MERGLPLLCATLALALALAGA) are cleaved as a signal peptide. The Extracellular segment spans residues 22–855 (FRSDKCGGTI…PGNVLKTLDP (834 aa)). Disulfide bonds link C27–C54, C82–C104, and C147–C173. 2 CUB domains span residues 27–141 (CGGT…YEIF) and 147–265 (CSQN…YSVL). N150 carries an N-linked (GlcNAc...) asparagine glycan. 3 residues coordinate Ca(2+): E195, D209, and D250. Cysteines 206 and 228 form a disulfide. N-linked (GlcNAc...) asparagine glycosylation is found at N261, N300, and N522. Cystine bridges form between C275–C424 and C431–C583. 2 F5/8 type C domains span residues 275-424 (CMEA…VYGC) and 431-583 (CSGM…LLGC). An O-linked (Xyl...) (chondroitin sulfate) serine; alternate glycan is attached at S612. Residue S612 is glycosylated (O-linked (Xyl...) (heparan sulfate) serine; alternate). Positions 645–811 (TYGFNCEFGW…NHIPQEDCAK (167 aa)) constitute an MAM domain. An O-linked (Xyl...) (chondroitin sulfate) serine glycan is attached at S829. N841 carries N-linked (GlcNAc...) asparagine glycosylation. Residues 856-880 (ILITIIAMSALGVLLGAVCGVVLYC) traverse the membrane as a helical segment. Residues 881-922 (ACWHNGMSERNLSALENYNFELVDGVKLKKDKLNPQSNYSEA) lie on the Cytoplasmic side of the membrane. S893 bears the Phosphoserine mark.

Belongs to the neuropilin family. As to quaternary structure, homodimer, and heterodimer with NRP2. Binds PLXNB1. Interacts with FER. Interacts with VEGFA. Interacts with ABCB8/MITOSUR in mitochondria. Found in the embryonic nervous system. Expressed in dorsal root ganglia.

The protein resides in the mitochondrion membrane. Its subcellular location is the cell membrane. It is found in the cytoplasm. Functionally, cell-surface receptor involved in the development of the cardiovascular system, in angiogenesis, in the formation of certain neuronal circuits and in organogenesis outside the nervous system. Mediates the chemorepulsant activity of semaphorins. Recognizes a C-end rule (CendR) motif R/KXXR/K on its ligands which causes cellular internalization and vascular leakage. It binds to semaphorin 3A, the PLGF-2 isoform of PGF, the VEGF165 isoform of VEGFA and VEGFB. Coexpression with KDR results in increased VEGF165 binding to KDR as well as increased chemotaxis. Regulates VEGF-induced angiogenesis. Binding to VEGFA initiates a signaling pathway needed for motor neuron axon guidance and cell body migration, including for the caudal migration of facial motor neurons from rhombomere 4 to rhombomere 6 during embryonic development. Regulates mitochondrial iron transport via interaction with ABCB8/MITOSUR. The chain is Neuropilin-1 (Nrp1) from Rattus norvegicus (Rat).